Consider the following 539-residue polypeptide: MEFECQERLEAANDQRSESGLLNTDLRIGNDGSVEIPNVKLCCQKKKGTLVPSGSKQLLSDKDLSTTIIDLPQALISEILNCLDPKELGLVSCVSTYLHRLASEHHAWKEFYRERWGLPVVFGAASSGLSDERSWKDLFVEREFRSRTFLGRYSIDTLYGHTEAVRTVFLLASAKLVFTSGYDSIVRMWDMEEGLSIAASKPLGCTIRALAADTKLLVAGGTDGFIHCWKSLDGLRNLFDLTGFQKEKTEFRLWGHEGPITSLALDMTSIFSGSWDMSVRIWDRSSMKCVKTLRHSDWVWGLAPHETTLASTSGSDVYIWDVSSETPLAIIPDAHEGTTYSLARSHTGDFLFTGGEDGGIKMFEIRRYGSETSVVLISQWMPHTSPVYSLSFEFPWLVSASGDGKLALIDVRKLLKTNRCAYSKRISSSTVEPPQRMLHGFGSNLFSVDVGYDRIVCGGEEGTVRIWNFTQALEIERRTRALKGMRHENRMRRRRMQMEMNAKNGRPDQCSIAAHKNPINGERNRAWHSKRRASGKAKA.

The 47-residue stretch at 65-111 (STTIIDLPQALISEILNCLDPKELGLVSCVSTYLHRLASEHHAWKEF) folds into the F-box domain. WD repeat units lie at residues 160–199 (GHTE…SIAA), 201–239 (KPLG…RNLF), 255–292 (GHEG…CVKT), 294–330 (RHSD…PLAI), 334–373 (AHEG…SETS), 382–419 (PHTS…KTNR), and 433–477 (PPQR…EIER). The segment at 505-539 (GRPDQCSIAAHKNPINGERNRAWHSKRRASGKAKA) is disordered. The span at 526-539 (AWHSKRRASGKAKA) shows a compositional bias: basic residues.

The polypeptide is F-box/WD-40 repeat-containing protein At5g21040 (Arabidopsis thaliana (Mouse-ear cress)).